Reading from the N-terminus, the 112-residue chain is Nucleoid-associated protein CPR_0056 (112 aa).

Over residues 91 to 100 (ASEETSEKMG) the composition is skewed to basic and acidic residues. A disordered region spans residues 91–112 (ASEETSEKMGKLTGGMGMPGLF). Residues 102–112 (LTGGMGMPGLF) show a composition bias toward gly residues.

Belongs to the YbaB/EbfC family. Homodimer.

The protein resides in the cytoplasm. It localises to the nucleoid. In terms of biological role, binds to DNA and alters its conformation. May be involved in regulation of gene expression, nucleoid organization and DNA protection. This Clostridium perfringens (strain SM101 / Type A) protein is Nucleoid-associated protein CPR_0056.